Consider the following 248-residue polypeptide: Proteasome subunit alpha type-3 (248 aa).

This sequence belongs to the peptidase T1A family. The 26S proteasome consists of a 20S proteasome core and two 19S regulatory subunits. The 20S proteasome core is composed of 28 subunits that are arranged in four stacked rings, resulting in a barrel-shaped structure. The two end rings are each formed by seven alpha subunits, and the two central rings are each formed by seven beta subunits. The catalytic chamber with the active sites is on the inside of the barrel.

It localises to the cytoplasm. It is found in the nucleus. In terms of biological role, the proteasome is a multicatalytic proteinase complex which is characterized by its ability to cleave peptides with Arg, Phe, Tyr, Leu, and Glu adjacent to the leaving group at neutral or slightly basic pH. The proteasome has an ATP-dependent proteolytic activity. The chain is Proteasome subunit alpha type-3 (psmA3) from Dictyostelium discoideum (Social amoeba).